The sequence spans 605 residues: UvrABC system protein C (605 aa).

In terms of domain architecture, GIY-YIG spans 13-92 (TSPGVYLMKD…IKKHHPKYNV (80 aa)). The UVR domain maps to 205–240 (SEIIQDLEKSIEKASQEQKFEQAGIYYRTLKLIQQA).

This sequence belongs to the UvrC family. In terms of assembly, interacts with UvrB in an incision complex.

It localises to the cytoplasm. Functionally, the UvrABC repair system catalyzes the recognition and processing of DNA lesions. UvrC both incises the 5' and 3' sides of the lesion. The N-terminal half is responsible for the 3' incision and the C-terminal half is responsible for the 5' incision. The sequence is that of UvrABC system protein C from Chlamydia caviae (strain ATCC VR-813 / DSM 19441 / 03DC25 / GPIC) (Chlamydophila caviae).